The sequence spans 459 residues: Bifunctional protein GlmU (459 aa).

The interval 1–230 is pyrophosphorylase; sequence MTTRNTIILA…FDESMGVNDR (230 aa). Residues 9–12, Lys-23, Gln-73, 78–79, 101–103, Gly-140, Glu-155, Asn-170, and Asn-228 contribute to the UDP-N-acetyl-alpha-D-glucosamine site; these read LAAG, GT, and SGD. Asp-103 lines the Mg(2+) pocket. Asn-228 lines the Mg(2+) pocket. Positions 231 to 251 are linker; the sequence is VALSAATKIMRDRINEAHMRD. Positions 252–459 are N-acetyltransferase; that stretch reads GVTLIDPATT…YQKLPYRGED (208 aa). Residues Arg-333 and Lys-351 each contribute to the UDP-N-acetyl-alpha-D-glucosamine site. His-363 serves as the catalytic Proton acceptor. UDP-N-acetyl-alpha-D-glucosamine-binding residues include Tyr-366 and Asn-377. Acetyl-CoA is bound by residues 386–387, Ser-405, Ala-423, and Arg-440; that span reads NY.

In the N-terminal section; belongs to the N-acetylglucosamine-1-phosphate uridyltransferase family. The protein in the C-terminal section; belongs to the transferase hexapeptide repeat family. Homotrimer. Requires Mg(2+) as cofactor.

Its subcellular location is the cytoplasm. It catalyses the reaction alpha-D-glucosamine 1-phosphate + acetyl-CoA = N-acetyl-alpha-D-glucosamine 1-phosphate + CoA + H(+). The catalysed reaction is N-acetyl-alpha-D-glucosamine 1-phosphate + UTP + H(+) = UDP-N-acetyl-alpha-D-glucosamine + diphosphate. It participates in nucleotide-sugar biosynthesis; UDP-N-acetyl-alpha-D-glucosamine biosynthesis; N-acetyl-alpha-D-glucosamine 1-phosphate from alpha-D-glucosamine 6-phosphate (route II): step 2/2. The protein operates within nucleotide-sugar biosynthesis; UDP-N-acetyl-alpha-D-glucosamine biosynthesis; UDP-N-acetyl-alpha-D-glucosamine from N-acetyl-alpha-D-glucosamine 1-phosphate: step 1/1. It functions in the pathway bacterial outer membrane biogenesis; LPS lipid A biosynthesis. Catalyzes the last two sequential reactions in the de novo biosynthetic pathway for UDP-N-acetylglucosamine (UDP-GlcNAc). The C-terminal domain catalyzes the transfer of acetyl group from acetyl coenzyme A to glucosamine-1-phosphate (GlcN-1-P) to produce N-acetylglucosamine-1-phosphate (GlcNAc-1-P), which is converted into UDP-GlcNAc by the transfer of uridine 5-monophosphate (from uridine 5-triphosphate), a reaction catalyzed by the N-terminal domain. This Levilactobacillus brevis (strain ATCC 367 / BCRC 12310 / CIP 105137 / JCM 1170 / LMG 11437 / NCIMB 947 / NCTC 947) (Lactobacillus brevis) protein is Bifunctional protein GlmU.